The chain runs to 228 residues: Indole-3-glycerol phosphate synthase (228 aa).

This sequence belongs to the TrpC family.

The enzyme catalyses 1-(2-carboxyphenylamino)-1-deoxy-D-ribulose 5-phosphate + H(+) = (1S,2R)-1-C-(indol-3-yl)glycerol 3-phosphate + CO2 + H2O. It functions in the pathway amino-acid biosynthesis; L-tryptophan biosynthesis; L-tryptophan from chorismate: step 4/5. This Pyrococcus furiosus (strain ATCC 43587 / DSM 3638 / JCM 8422 / Vc1) protein is Indole-3-glycerol phosphate synthase.